We begin with the raw amino-acid sequence, 132 residues long: Small ribosomal subunit protein uS8 (132 aa).

Belongs to the universal ribosomal protein uS8 family. In terms of assembly, part of the 30S ribosomal subunit. Contacts proteins S5 and S12.

One of the primary rRNA binding proteins, it binds directly to 16S rRNA central domain where it helps coordinate assembly of the platform of the 30S subunit. This chain is Small ribosomal subunit protein uS8, found in Coprothermobacter proteolyticus (strain ATCC 35245 / DSM 5265 / OCM 4 / BT).